The chain runs to 333 residues: Ketol-acid reductoisomerase (NADP(+)) (333 aa).

One can recognise a KARI N-terminal Rossmann domain in the interval 6-186 (TRVYTECDAD…GALRAGAIQT (181 aa)). NADP(+) contacts are provided by residues 29–32 (YGSQ), Lys-52, Ser-55, Ser-57, and 87–90 (DPAQ). His-112 is an active-site residue. Gly-138 contacts NADP(+). Residues 187–332 (TFTEETETDL…ARLRALFSWS (146 aa)) form the KARI C-terminal knotted domain. Positions 195, 199, 231, and 235 each coordinate Mg(2+). Substrate is bound at residue Ser-256.

The protein belongs to the ketol-acid reductoisomerase family. Mg(2+) is required as a cofactor.

It carries out the reaction (2R)-2,3-dihydroxy-3-methylbutanoate + NADP(+) = (2S)-2-acetolactate + NADPH + H(+). It catalyses the reaction (2R,3R)-2,3-dihydroxy-3-methylpentanoate + NADP(+) = (S)-2-ethyl-2-hydroxy-3-oxobutanoate + NADPH + H(+). It participates in amino-acid biosynthesis; L-isoleucine biosynthesis; L-isoleucine from 2-oxobutanoate: step 2/4. It functions in the pathway amino-acid biosynthesis; L-valine biosynthesis; L-valine from pyruvate: step 2/4. Involved in the biosynthesis of branched-chain amino acids (BCAA). Catalyzes an alkyl-migration followed by a ketol-acid reduction of (S)-2-acetolactate (S2AL) to yield (R)-2,3-dihydroxy-isovalerate. In the isomerase reaction, S2AL is rearranged via a Mg-dependent methyl migration to produce 3-hydroxy-3-methyl-2-ketobutyrate (HMKB). In the reductase reaction, this 2-ketoacid undergoes a metal-dependent reduction by NADPH to yield (R)-2,3-dihydroxy-isovalerate. The sequence is that of Ketol-acid reductoisomerase (NADP(+)) from Tropheryma whipplei (strain TW08/27) (Whipple's bacillus).